Consider the following 168-residue polypeptide: T-cell surface glycoprotein CD3 delta chain (168 aa).

Positions 1 to 21 (MEHSRFLSCLILAALLSQVNP) are cleaved as a signal peptide. At 22–102 (RILKVLEPED…CVELDTATLA (81 aa)) the chain is on the extracellular side. An intrachain disulfide couples cysteine 37 to cysteine 74. Residues asparagine 38 and asparagine 56 are each glycosylated (N-linked (GlcNAc...) asparagine). The chain crosses the membrane as a helical span at residues 103-123 (GMIITDIIATVLLALGVYCFA). Residues 124–168 (GHETGRFSRAADTQALMGNDQLYQPLRERNDAQYSRLGDKWARNK) lie on the Cytoplasmic side of the membrane. Residues 135–163 (DTQALMGNDQLYQPLRERNDAQYSRLGDK) enclose the ITAM domain. Tyrosine 146 and tyrosine 157 each carry phosphotyrosine.

As to quaternary structure, the TCR-CD3 complex is composed of a CD3D/CD3E and a CD3G/CD3E heterodimers that preferentially associate with TCRalpha and TCRbeta, respectively, to form TCRalpha/CD3E/CD3G and TCRbeta/CD3G/CD3E trimers. In turn, the hexamer interacts with CD3Z homodimer to form the TCR-CD3 complex. Alternatively, TCRalpha and TCRbeta can be replaced by TCRgamma and TCRdelta. Interacts with coreceptors CD4 and CD8. Phosphorylated on Tyr residues after T-cell receptor triggering by LCK in association with CD4/CD8. CD3D is mostly present on T-lymphocytes with its TCR-CD3 partners. Present also in fetal NK-cells.

The protein localises to the cell membrane. In terms of biological role, part of the TCR-CD3 complex present on T-lymphocyte cell surface that plays an essential role in adaptive immune response. When antigen presenting cells (APCs) activate T-cell receptor (TCR), TCR-mediated signals are transmitted across the cell membrane by the CD3 chains CD3D, CD3E, CD3G and CD3Z. All CD3 chains contain immunoreceptor tyrosine-based activation motifs (ITAMs) in their cytoplasmic domain. Upon TCR engagement, these motifs become phosphorylated by Src family protein tyrosine kinases LCK and FYN, resulting in the activation of downstream signaling pathways. In addition of this role of signal transduction in T-cell activation, CD3D plays an essential role in thymocyte differentiation. Indeed, participates in correct intracellular TCR-CD3 complex assembly and surface expression. In absence of a functional TCR-CD3 complex, thymocytes are unable to differentiate properly. Interacts with CD4 and CD8 and thus serves to establish a functional link between the TCR and coreceptors CD4 and CD8, which is needed for activation and positive selection of CD4 or CD8 T-cells. This chain is T-cell surface glycoprotein CD3 delta chain (CD3D), found in Bos taurus (Bovine).